The chain runs to 101 residues: Small ribosomal subunit protein uS14 (101 aa).

This sequence belongs to the universal ribosomal protein uS14 family. Part of the 30S ribosomal subunit. Contacts proteins S3 and S10.

Functionally, binds 16S rRNA, required for the assembly of 30S particles and may also be responsible for determining the conformation of the 16S rRNA at the A site. In Marinobacter nauticus (strain ATCC 700491 / DSM 11845 / VT8) (Marinobacter aquaeolei), this protein is Small ribosomal subunit protein uS14.